The chain runs to 361 residues: tRNA-specific 2-thiouridylase MnmA (361 aa).

Residues 6–13 (LVSGGVDS) and I32 each bind ATP. The segment at 93–95 (NPD) is interaction with target base in tRNA. C98 acts as the Nucleophile in catalysis. A disulfide bridge connects residues C98 and C193. G121 provides a ligand contact to ATP. The segment at 143 to 145 (KDQ) is interaction with tRNA. The Cysteine persulfide intermediate role is filled by C193.

It belongs to the MnmA/TRMU family.

It localises to the cytoplasm. The catalysed reaction is S-sulfanyl-L-cysteinyl-[protein] + uridine(34) in tRNA + AH2 + ATP = 2-thiouridine(34) in tRNA + L-cysteinyl-[protein] + A + AMP + diphosphate + H(+). In terms of biological role, catalyzes the 2-thiolation of uridine at the wobble position (U34) of tRNA, leading to the formation of s(2)U34. The sequence is that of tRNA-specific 2-thiouridylase MnmA from Porphyromonas gingivalis (strain ATCC 33277 / DSM 20709 / CIP 103683 / JCM 12257 / NCTC 11834 / 2561).